Here is a 488-residue protein sequence, read N- to C-terminus: Protein nucleotidyltransferase YdiU (488 aa).

Gly-91, Gly-93, Arg-94, Lys-114, Asp-126, Gly-127, Arg-177, and Arg-184 together coordinate ATP. Positions 108 to 127 (RFDIQLKGSGPTPYSRRGDG) are disordered. Catalysis depends on Asp-253, which acts as the Proton acceptor. 2 residues coordinate Mg(2+): Asn-254 and Asp-263. An ATP-binding site is contributed by Asp-263.

It belongs to the SELO family. It depends on Mg(2+) as a cofactor. Requires Mn(2+) as cofactor.

It carries out the reaction L-seryl-[protein] + ATP = 3-O-(5'-adenylyl)-L-seryl-[protein] + diphosphate. The enzyme catalyses L-threonyl-[protein] + ATP = 3-O-(5'-adenylyl)-L-threonyl-[protein] + diphosphate. The catalysed reaction is L-tyrosyl-[protein] + ATP = O-(5'-adenylyl)-L-tyrosyl-[protein] + diphosphate. It catalyses the reaction L-histidyl-[protein] + UTP = N(tele)-(5'-uridylyl)-L-histidyl-[protein] + diphosphate. It carries out the reaction L-seryl-[protein] + UTP = O-(5'-uridylyl)-L-seryl-[protein] + diphosphate. The enzyme catalyses L-tyrosyl-[protein] + UTP = O-(5'-uridylyl)-L-tyrosyl-[protein] + diphosphate. Nucleotidyltransferase involved in the post-translational modification of proteins. It can catalyze the addition of adenosine monophosphate (AMP) or uridine monophosphate (UMP) to a protein, resulting in modifications known as AMPylation and UMPylation. In Bacillus anthracis (strain A0248), this protein is Protein nucleotidyltransferase YdiU.